We begin with the raw amino-acid sequence, 485 residues long: Glutamate--tRNA ligase (485 aa).

Residues 11-21 carry the 'HIGH' region motif; it reads PSPTGYMHVGN. Residues cysteine 108, cysteine 110, cysteine 135, and aspartate 137 each contribute to the Zn(2+) site. The short motif at 252–256 is the 'KMSKS' region element; sequence KLSKR. Lysine 255 provides a ligand contact to ATP.

It belongs to the class-I aminoacyl-tRNA synthetase family. Glutamate--tRNA ligase type 1 subfamily. In terms of assembly, monomer. It depends on Zn(2+) as a cofactor.

The protein resides in the cytoplasm. It catalyses the reaction tRNA(Glu) + L-glutamate + ATP = L-glutamyl-tRNA(Glu) + AMP + diphosphate. Its function is as follows. Catalyzes the attachment of glutamate to tRNA(Glu) in a two-step reaction: glutamate is first activated by ATP to form Glu-AMP and then transferred to the acceptor end of tRNA(Glu). The chain is Glutamate--tRNA ligase from Clostridium botulinum (strain ATCC 19397 / Type A).